The following is a 337-amino-acid chain: N-acetyl-gamma-glutamyl-phosphate reductase (337 aa).

Cys-145 is a catalytic residue.

Belongs to the NAGSA dehydrogenase family. Type 1 subfamily.

It is found in the cytoplasm. The catalysed reaction is N-acetyl-L-glutamate 5-semialdehyde + phosphate + NADP(+) = N-acetyl-L-glutamyl 5-phosphate + NADPH + H(+). Its pathway is amino-acid biosynthesis; L-arginine biosynthesis; N(2)-acetyl-L-ornithine from L-glutamate: step 3/4. Functionally, catalyzes the NADPH-dependent reduction of N-acetyl-5-glutamyl phosphate to yield N-acetyl-L-glutamate 5-semialdehyde. This is N-acetyl-gamma-glutamyl-phosphate reductase from Methanosarcina barkeri (strain Fusaro / DSM 804).